The following is a 393-amino-acid chain: MTVPTTRKDLMIVNMGPQHPSMHGVLRLVVTLDGEDVIDCEPILGYLHRGMEKIAENRTIIQYLPYVTRWDYLATMFTEAITVNGPEQLGNIQVPKRASYIRVIMLELSRIASHLLWLGPFMADIGAQTPFFYIFRERELIYDLFESATGMRMMHNYFRIGGVAADLPYGWIDKCLDFCDYFLTGVTEYQKLITRNPIFLERVEGVGIIGGEEAINWGLSGPMLRASGIQWDLRKVDHYECYDEFDWEVQWQKEGDSLARYLVRISEMTESIKILQQALEGIPGGPYENLEVRRFDRAKDSEWNDFDYRFISKKPSPTFELSKQELYVRVEAPKGELGIFLVGDKSVFPWRWKIRPPGFINLQILPQLVKRMKLADIMTILGSIDIIMGEVDR.

Belongs to the complex I 49 kDa subunit family. As to quaternary structure, NDH is composed of at least 16 different subunits, 5 of which are encoded in the nucleus.

The protein resides in the plastid. The protein localises to the chloroplast thylakoid membrane. The catalysed reaction is a plastoquinone + NADH + (n+1) H(+)(in) = a plastoquinol + NAD(+) + n H(+)(out). The enzyme catalyses a plastoquinone + NADPH + (n+1) H(+)(in) = a plastoquinol + NADP(+) + n H(+)(out). Its function is as follows. NDH shuttles electrons from NAD(P)H:plastoquinone, via FMN and iron-sulfur (Fe-S) centers, to quinones in the photosynthetic chain and possibly in a chloroplast respiratory chain. The immediate electron acceptor for the enzyme in this species is believed to be plastoquinone. Couples the redox reaction to proton translocation, and thus conserves the redox energy in a proton gradient. The sequence is that of NAD(P)H-quinone oxidoreductase subunit H, chloroplastic from Ranunculus macranthus (Large buttercup).